The primary structure comprises 351 residues: Outer membrane protein A (351 aa).

An N-terminal signal peptide occupies residues 1–21; it reads MKKTAIAITVALAGFATVAQA. The next 8 membrane-spanning stretches (beta stranded) occupy residues 27–37, 55–66, 70–78, 96–107, 112–120, 147–156, 161–168, and 187–195; these read TWYTGAKLGWS, QLGAGAFGGYQV, VGFEMGYDW, QGVQLTAKLGYP, LDVYTRLGG, PVFAGGVEWA, IATRLEYQ, and LLSLGVSYR. 4 tandem repeats follow at residues 206–207, 208–209, 210–211, and 212–213. The segment at 206–213 is 4 X 2 AA tandem repeats of A-P; the sequence is APAPAPAP. The region spanning 215-343 is the OmpA-like domain; it reads VQTKHFTLKS…RVEIEVKGIK (129 aa). A disulfide bridge connects residues Cys-316 and Cys-328.

Belongs to the outer membrane OOP (TC 1.B.6) superfamily. OmpA family. In terms of assembly, monomer and homodimer.

The protein localises to the cell outer membrane. Its function is as follows. With TolR probably plays a role in maintaining the position of the peptidoglycan cell wall in the periplasm. Acts as a porin with low permeability that allows slow penetration of small solutes; an internal gate slows down solute passage. Functionally, required for conjugation with F-type plasmids; probably serves as the mating receptor on recipient cells. In Shigella dysenteriae, this protein is Outer membrane protein A.